The following is a 379-amino-acid chain: Chaperone protein DnaJ (379 aa).

The J domain occupies 5–70; it reads DYYELLEVSR…QKRAAYDQFG (66 aa). The segment at 135–213 adopts a CR-type zinc-finger fold; sequence GKEVEITVPR…CHGQGRVRES (79 aa). Zn(2+) contacts are provided by C148, C151, C165, C168, C187, C190, C201, and C204. CXXCXGXG motif repeat units follow at residues 148–155, 165–172, 187–194, and 201–208; these read CTVCEGSG, CETCQGMG, CPTCHGEG, and CASCHGQG.

It belongs to the DnaJ family. As to quaternary structure, homodimer. It depends on Zn(2+) as a cofactor.

Its subcellular location is the cytoplasm. In terms of biological role, participates actively in the response to hyperosmotic and heat shock by preventing the aggregation of stress-denatured proteins and by disaggregating proteins, also in an autonomous, DnaK-independent fashion. Unfolded proteins bind initially to DnaJ; upon interaction with the DnaJ-bound protein, DnaK hydrolyzes its bound ATP, resulting in the formation of a stable complex. GrpE releases ADP from DnaK; ATP binding to DnaK triggers the release of the substrate protein, thus completing the reaction cycle. Several rounds of ATP-dependent interactions between DnaJ, DnaK and GrpE are required for fully efficient folding. Also involved, together with DnaK and GrpE, in the DNA replication of plasmids through activation of initiation proteins. The protein is Chaperone protein DnaJ of Legionella pneumophila (strain Lens).